The primary structure comprises 197 residues: Phosphoheptose isomerase (197 aa).

In terms of domain architecture, SIS spans 37–197; the sequence is MLQCLMNDGK…CIDSVLLEGM (161 aa). 52–54 contributes to the substrate binding site; sequence NGG. The Zn(2+) site is built by histidine 61 and glutamate 65. Residues glutamate 65, 94–95, 120–122, serine 125, and glutamine 175 contribute to the substrate site; these read ND and STS. Zn(2+) contacts are provided by glutamine 175 and histidine 183.

Belongs to the SIS family. GmhA subfamily. Homotetramer. The cofactor is Zn(2+).

The protein localises to the cytoplasm. It carries out the reaction 2 D-sedoheptulose 7-phosphate = D-glycero-alpha-D-manno-heptose 7-phosphate + D-glycero-beta-D-manno-heptose 7-phosphate. The protein operates within carbohydrate biosynthesis; D-glycero-D-manno-heptose 7-phosphate biosynthesis; D-glycero-alpha-D-manno-heptose 7-phosphate and D-glycero-beta-D-manno-heptose 7-phosphate from sedoheptulose 7-phosphate: step 1/1. Its function is as follows. Catalyzes the isomerization of sedoheptulose 7-phosphate in D-glycero-D-manno-heptose 7-phosphate. The sequence is that of Phosphoheptose isomerase from Neisseria meningitidis serogroup C (strain 053442).